Reading from the N-terminus, the 338-residue chain is MNAVWTDNDTQAEDLSPQGRVASQLVRLKSDLQAFADATASAPATREPKIERETHKLEKRLCRQVGQAIMDFNMIEEGDRVMVCVSGGKDSYGLLDILLKMQQRAPINFEIVAVNLDQKQPGFPAHILPEYLAKLGIEFHIETQDTYSIVKKVIPEGKTMCSLCSRLRRGILYRVADELKITKIALGHHRDDMLQTFFLNMFFGGKLKGMPPKLVSDDGGHIVIRPLANVAEKDLTRWAAHRQFPIIPCSLCGSQENLQRQLIGQMLRDWEKQYPGRTETMFTALQNVVPSHLMDATRYDFKGLKITGVPDADGDRVFDEETFPMAKLAGVQVLGSSC.

The short motif at 86 to 91 (SGGKDS) is the PP-loop motif element. [4Fe-4S] cluster contacts are provided by cysteine 161, cysteine 164, and cysteine 252.

This sequence belongs to the TtcA family. Homodimer. Mg(2+) is required as a cofactor. Requires [4Fe-4S] cluster as cofactor.

Its subcellular location is the cytoplasm. The catalysed reaction is cytidine(32) in tRNA + S-sulfanyl-L-cysteinyl-[cysteine desulfurase] + AH2 + ATP = 2-thiocytidine(32) in tRNA + L-cysteinyl-[cysteine desulfurase] + A + AMP + diphosphate + H(+). It participates in tRNA modification. Catalyzes the ATP-dependent 2-thiolation of cytidine in position 32 of tRNA, to form 2-thiocytidine (s(2)C32). The sulfur atoms are provided by the cysteine/cysteine desulfurase (IscS) system. In Albidiferax ferrireducens (strain ATCC BAA-621 / DSM 15236 / T118) (Rhodoferax ferrireducens), this protein is tRNA-cytidine(32) 2-sulfurtransferase.